The chain runs to 701 residues: MDGSHFPMKSTTGEPVSSGKKGKRRKVIKSCAFCRKRKLKCSQARPMCQQCVIRKLPQCVYTEEFNYPLSNTELFEQVPNVALVQKIENLQTLLKENDNNNAKPVYCRSSENPLRSLRTSVLGDNGSRYVFGPTSWKTLSLFEQNKFQTEFQNLWKVLKPLPECTKSQLNENDVVADLPSFPQMESCIKSFFAGPLFGILHIFNQDDILSLLDRLFIRDTTDKNLVILLDLQGNAKDKYNLGIVLQILCLGYYNQDIPSSVSHFLHTLSAASLSSSSSNFVEKLQFFLLSYISVMINCTDGVWDATQGVDLINELCQGCISLGLNDIDKWYLNESEETKQNLRCIWFWALFLDVSTSYDIGNPPSISDDLLDLSIFTAQNFQSPSIDFRRVKLMHDFLDVSRFTTREIHKREMNEKLTTFSLRLIEFIQSNFSPIEHYTNSVYYSDIDPFDILILSRSLSIVASIYNIEMIIAQQSRIIDKNRMVQFLLISISVCVNTMVFHFKEPINDQENVLTEGLKLSIILINPLLIRIVSQVYSLAFNRLIFREKAFLFLIDLDTGKKIQFIKYEEENFDELLTGFDVRTDKFLSFSGTIIRFYEIIDSIFAVNERNKRLLKAVSNFYQLTSTLAFERVSRVLFDKASQARIETEKIWLKKGINMEHFSDLMIEDFINDVWKTFKEISKDLWSIDKKKFYKQYHFDL.

A disordered region spans residues 1-22 (MDGSHFPMKSTTGEPVSSGKKG). The zn(2)-C6 fungal-type DNA-binding region spans 31–59 (CAFCRKRKLKCSQARPMCQQCVIRKLPQC).

The protein localises to the cytoplasm. Its subcellular location is the nucleus. Functionally, up-regulates the transcription of the genes for ATP-binding cassette (ABC) transporters YOR1 and PDR15, for major facilitator superfamily transporter AZR1, for pleiotropic drug resistance SNG1, for alpha-glucosidase YJL216C and for YLL056C. The polypeptide is Transcription factor PDR8 (PDR8) (Saccharomyces cerevisiae (strain ATCC 204508 / S288c) (Baker's yeast)).